Here is a 474-residue protein sequence, read N- to C-terminus: Alkylcitrate dehydratase phiI (474 aa).

Belongs to the PrpD family. As to quaternary structure, monomer.

The enzyme catalyses (4E,11E)-2-hydroxytrideca-4,11-dien-1,2,3-tricarboxylate + 2 H(+) = [4-(deca-1,8-diyl)-2,5-dioxo-2,5-dihydro-3-furanyl]acetate + 2 H2O. The protein operates within secondary metabolite biosynthesis. Alkylcitrate dehydratasee; part of the gene cluster that mediates the biosynthesis of the antihypercholesterolemic agents phomoidrides which are dimeric anhydrides. Within the pathway, the alkylcitrate synthase (ACS) tstiJ and the alkylcitrate dehydratase (ACDH) tstI produce the decarboxylated monomeric anhydrides by coupling the C12-fatty acyl product from phiA with oxalacetic acid. The pathway begins with the highly reducing polyketide synthase tstA that catalyzes the formation of a C12-fatty acyl-ACP, starting from one acetate and 5 malonate units. The hydrolase tstM is involved in the release of the C12-fatty acyl chain from phiA. The alkylcitrate synthase (ACS) tstJ and the alkylcitrate dehydratase (ACDH) tstI then give rise to decarboxylated monomeric anhydrides by coupling the C12-fatty acyl chain with oxalacetic acid. The cyclase tstC is responsible for the dimerization of the monomeric anhydrides which leads to the production of prephomoidride that contains the characteristic bicyclo[4.3.1]deca-1,6-diene system of phomoidrides. Iterative oxidation catalyzed by the alpha-ketoglutarate-dependent dioxygenase tstK produced then phomoidride A. Finally, the methyltransferase tstE converts phomoidride A to phomoidride B via an acetalization reaction. The phosphatidylethanolamine-binding protein tstB and tstN are not essential for dimerization and their functions have still to be determined. In Talaromyces stipitatus (strain ATCC 10500 / CBS 375.48 / QM 6759 / NRRL 1006) (Penicillium stipitatum), this protein is Alkylcitrate dehydratase phiI.